Reading from the N-terminus, the 81-residue chain is Putative membrane protein insertion efficiency factor (81 aa).

This sequence belongs to the UPF0161 family.

The protein localises to the cell inner membrane. Its function is as follows. Could be involved in insertion of integral membrane proteins into the membrane. This chain is Putative membrane protein insertion efficiency factor, found in Thermosipho melanesiensis (strain DSM 12029 / CIP 104789 / BI429).